We begin with the raw amino-acid sequence, 96 residues long: Elicitor peptide 3 (96 aa).

Positions 1–73 (MENLRNGEDN…EEEEEDGMTI (73 aa)) are excised as a propeptide. Positions 32–96 (SGLESSSSSS…PSSGKGGKHN (65 aa)) are disordered. Residues 35–49 (ESSSSSSSSCDLSSS) are compositionally biased toward low complexity. The segment covering 52 to 71 (EEDESIDIKEEEEEEEEDGM) has biased composition (acidic residues).

It belongs to the brassicaceae elicitor peptide family.

In terms of biological role, elicitor of plant defense. This chain is Elicitor peptide 3 (PEP3), found in Arabidopsis thaliana (Mouse-ear cress).